Consider the following 172-residue polypeptide: Sec-independent protein translocase protein TatB (172 aa).

The helical transmembrane segment at 1-21 (MIDLGISKLALIGAVALVVIG) threads the bilayer. Positions 97–129 (GDPASRQTATQAAEWRPAPAKSRNGRNSWRNKQ) are disordered.

The protein belongs to the TatB family. In terms of assembly, the Tat system comprises two distinct complexes: a TatABC complex, containing multiple copies of TatA, TatB and TatC subunits, and a separate TatA complex, containing only TatA subunits. Substrates initially bind to the TatABC complex, which probably triggers association of the separate TatA complex to form the active translocon.

It is found in the cell inner membrane. In terms of biological role, part of the twin-arginine translocation (Tat) system that transports large folded proteins containing a characteristic twin-arginine motif in their signal peptide across membranes. Together with TatC, TatB is part of a receptor directly interacting with Tat signal peptides. TatB may form an oligomeric binding site that transiently accommodates folded Tat precursor proteins before their translocation. The sequence is that of Sec-independent protein translocase protein TatB from Ralstonia nicotianae (strain ATCC BAA-1114 / GMI1000) (Ralstonia solanacearum).